The sequence spans 327 residues: Mitochondrial thiamine pyrophosphate carrier 1 (327 aa).

3 Solcar repeats span residues 13–114 (GSKL…AAQL), 126–214 (PAAA…LRAP), and 222–317 (FWGG…VLRA). Transmembrane regions (helical) follow at residues 16–36 (LQVV…IAPL), 95–111 (LLYI…YRSA), 132–152 (FVAG…LDLL), 189–209 (GIGP…AAYE), 223–245 (WGGQ…VFPL), and 292–309 (GLTV…VTMW).

The protein belongs to the mitochondrial carrier (TC 2.A.29) family.

Its subcellular location is the mitochondrion inner membrane. Its function is as follows. Mitochondrial transporter that mediates uptake of thiamine pyrophosphate (ThPP) into mitochondria. The chain is Mitochondrial thiamine pyrophosphate carrier 1 (TPC1) from Pyricularia oryzae (strain 70-15 / ATCC MYA-4617 / FGSC 8958) (Rice blast fungus).